Here is a 379-residue protein sequence, read N- to C-terminus: Nucleosome assembly protein 1;2 (379 aa).

The stretch at 26–80 (VNALKNKLQNLAGQHSDVLENLTPPVRKRVEFLREIQNQYDEMEAKFFEERAALE) forms a coiled coil. At serine 41 the chain carries Phosphoserine. The short motif at 47–62 (LTPPVRKRVEFLREIQ) is the Nuclear export signal element. The Nuclear localization signal signature appears at 222–227 (KKKPKK). The tract at residues 298 to 379 (AVEADDLDIE…GERPPECKQQ (82 aa)) is disordered. A compositionally biased stretch (acidic residues) spans 299-342 (VEADDLDIEDDDDEIDEDDDEEDEEDDEDDEEEDDEDDDEEEEA). Over residues 347 to 360 (KSKKKSSAGHKKAG) the composition is skewed to basic residues. Cysteine 376 is subject to Cysteine methyl ester. Cysteine 376 carries the S-farnesyl cysteine lipid modification. Positions 377–379 (KQQ) are cleaved as a propeptide — removed in mature form.

This sequence belongs to the nucleosome assembly protein (NAP) family. Can form homomeric and heteromeric protein complexes with NAP1;1, NAP1;3 and NAP1;4. Binds histone H2A. Ubiquitous.

It is found in the nucleus. The protein resides in the cytoplasm. In terms of biological role, may modulate chromatin structure by regulation of nucleosome assembly/disassembly. May function in nucleotide excision repair (NER). Involved in somatic homologous recombination. The protein is Nucleosome assembly protein 1;2 (NAP1;2) of Arabidopsis thaliana (Mouse-ear cress).